The chain runs to 168 residues: Small ribosomal subunit protein uS5 (168 aa).

The region spanning 14-77 (FEERVVSINR…EAAKKNLITV (64 aa)) is the S5 DRBM domain.

The protein belongs to the universal ribosomal protein uS5 family. Part of the 30S ribosomal subunit. Contacts proteins S4 and S8.

In terms of biological role, with S4 and S12 plays an important role in translational accuracy. Located at the back of the 30S subunit body where it stabilizes the conformation of the head with respect to the body. The polypeptide is Small ribosomal subunit protein uS5 (Lactococcus lactis subsp. cremoris (strain MG1363)).